The chain runs to 417 residues: UDP-N-acetylglucosamine 1-carboxyvinyltransferase (417 aa).

Residue 22-23 (KN) participates in phosphoenolpyruvate binding. Arginine 93 is a binding site for UDP-N-acetyl-alpha-D-glucosamine. The active-site Proton donor is cysteine 117. Cysteine 117 carries the 2-(S-cysteinyl)pyruvic acid O-phosphothioketal modification. UDP-N-acetyl-alpha-D-glucosamine contacts are provided by residues 122–126 (RPVDL), aspartate 305, and isoleucine 327.

This sequence belongs to the EPSP synthase family. MurA subfamily.

It is found in the cytoplasm. It carries out the reaction phosphoenolpyruvate + UDP-N-acetyl-alpha-D-glucosamine = UDP-N-acetyl-3-O-(1-carboxyvinyl)-alpha-D-glucosamine + phosphate. It participates in cell wall biogenesis; peptidoglycan biosynthesis. Cell wall formation. Adds enolpyruvyl to UDP-N-acetylglucosamine. The protein is UDP-N-acetylglucosamine 1-carboxyvinyltransferase of Thiobacillus denitrificans (strain ATCC 25259 / T1).